Here is a 599-residue protein sequence, read N- to C-terminus: Elongation factor 4 (599 aa).

A tr-type G domain is found at K2–E184. GTP contacts are provided by residues D14–T19 and N131–D134.

It belongs to the TRAFAC class translation factor GTPase superfamily. Classic translation factor GTPase family. LepA subfamily.

The protein localises to the cell inner membrane. It catalyses the reaction GTP + H2O = GDP + phosphate + H(+). Its function is as follows. Required for accurate and efficient protein synthesis under certain stress conditions. May act as a fidelity factor of the translation reaction, by catalyzing a one-codon backward translocation of tRNAs on improperly translocated ribosomes. Back-translocation proceeds from a post-translocation (POST) complex to a pre-translocation (PRE) complex, thus giving elongation factor G a second chance to translocate the tRNAs correctly. Binds to ribosomes in a GTP-dependent manner. This chain is Elongation factor 4, found in Citrobacter koseri (strain ATCC BAA-895 / CDC 4225-83 / SGSC4696).